The following is a 103-amino-acid chain: Secreted LysM effector Mgx1LysM (103 aa).

Positions 1-18 (MKVTTIIAALLSVAVVDA) are cleaved as a signal peptide. 2 disulfides stabilise this stretch: Cys31–Cys89 and Cys62–Cys97. The region spanning 37–85 (IPYVVKKGDTLTHIAHDIYKRKVGICDLAYTNHIGYNPDLIYEDQTLLI) is the LysM domain. The chitin site is built by Gly44, Thr48, Asp75, and Ile77.

It belongs to the secreted LysM effector family. Forms homodimers in a chitin-independent manner through interactions at the N-termini of Mgx1LysM monomers. Homodimers are further polymerized in a chitin-dependent manner.

The protein resides in the secreted. The protein localises to the cell wall. Its function is as follows. Secreted effector that enables the plant pathogenic fungus to manipulate host defenses for successful infection. Binds chitin and suppresses the chitin-induced reactive oxygen species (ROS) burst. Chitin-induced polymerization of homodimers forms a contiguous Mg1LysM highly oligomeric super-complexe that is anchored to the chitin in the fungal cell wall to prevent hydrolysis by host chitinases. In Zymoseptoria tritici (strain CBS 115943 / IPO323) (Speckled leaf blotch fungus), this protein is Secreted LysM effector Mgx1LysM.